The chain runs to 346 residues: Thiamine-phosphate synthase (346 aa).

The tract at residues 1–125 (MSVTPNPDQH…SKISAQIRYE (125 aa)) is unknown. The interval 126-346 (IYDLEVIILK…SKELLGKLKK (221 aa)) is thiamine-phosphate synthase. 4-amino-2-methyl-5-(diphosphooxymethyl)pyrimidine is bound by residues 177-181 (QYRCK) and asparagine 209. Residues aspartate 210 and aspartate 229 each coordinate Mg(2+). 4-amino-2-methyl-5-(diphosphooxymethyl)pyrimidine is bound at residue serine 248. Residue 274–276 (TKS) coordinates 2-[(2R,5Z)-2-carboxy-4-methylthiazol-5(2H)-ylidene]ethyl phosphate. Lysine 277 contacts 4-amino-2-methyl-5-(diphosphooxymethyl)pyrimidine. Residue glycine 304 participates in 2-[(2R,5Z)-2-carboxy-4-methylthiazol-5(2H)-ylidene]ethyl phosphate binding.

It belongs to the thiamine-phosphate synthase family. Mg(2+) serves as cofactor.

It carries out the reaction 2-[(2R,5Z)-2-carboxy-4-methylthiazol-5(2H)-ylidene]ethyl phosphate + 4-amino-2-methyl-5-(diphosphooxymethyl)pyrimidine + 2 H(+) = thiamine phosphate + CO2 + diphosphate. The enzyme catalyses 2-(2-carboxy-4-methylthiazol-5-yl)ethyl phosphate + 4-amino-2-methyl-5-(diphosphooxymethyl)pyrimidine + 2 H(+) = thiamine phosphate + CO2 + diphosphate. It catalyses the reaction 4-methyl-5-(2-phosphooxyethyl)-thiazole + 4-amino-2-methyl-5-(diphosphooxymethyl)pyrimidine + H(+) = thiamine phosphate + diphosphate. It functions in the pathway cofactor biosynthesis; thiamine diphosphate biosynthesis; thiamine phosphate from 4-amino-2-methyl-5-diphosphomethylpyrimidine and 4-methyl-5-(2-phosphoethyl)-thiazole: step 1/1. Condenses 4-methyl-5-(beta-hydroxyethyl)thiazole monophosphate (THZ-P) and 2-methyl-4-amino-5-hydroxymethyl pyrimidine pyrophosphate (HMP-PP) to form thiamine monophosphate (TMP). This chain is Thiamine-phosphate synthase, found in Prochlorococcus marinus (strain SARG / CCMP1375 / SS120).